The chain runs to 535 residues: Probable cytochrome P450 12b2, mitochondrial (535 aa).

Cysteine 479 is a binding site for heme.

It belongs to the cytochrome P450 family. Heme is required as a cofactor.

It is found in the mitochondrion membrane. This chain is Probable cytochrome P450 12b2, mitochondrial (Cyp12b2), found in Drosophila melanogaster (Fruit fly).